Reading from the N-terminus, the 411-residue chain is Serine hydroxymethyltransferase (411 aa).

(6S)-5,6,7,8-tetrahydrofolate-binding positions include Leu-119 and 123 to 125 (GHL). At Lys-228 the chain carries N6-(pyridoxal phosphate)lysine. 351 to 353 (SPF) contributes to the (6S)-5,6,7,8-tetrahydrofolate binding site.

This sequence belongs to the SHMT family. Homodimer. The cofactor is pyridoxal 5'-phosphate.

The protein localises to the cytoplasm. The enzyme catalyses (6R)-5,10-methylene-5,6,7,8-tetrahydrofolate + glycine + H2O = (6S)-5,6,7,8-tetrahydrofolate + L-serine. Its pathway is one-carbon metabolism; tetrahydrofolate interconversion. It participates in amino-acid biosynthesis; glycine biosynthesis; glycine from L-serine: step 1/1. Functionally, catalyzes the reversible interconversion of serine and glycine with tetrahydrofolate (THF) serving as the one-carbon carrier. This reaction serves as the major source of one-carbon groups required for the biosynthesis of purines, thymidylate, methionine, and other important biomolecules. Also exhibits THF-independent aldolase activity toward beta-hydroxyamino acids, producing glycine and aldehydes, via a retro-aldol mechanism. In Clostridium beijerinckii (strain ATCC 51743 / NCIMB 8052) (Clostridium acetobutylicum), this protein is Serine hydroxymethyltransferase.